Here is a 300-residue protein sequence, read N- to C-terminus: Zinc finger protein 705B (300 aa).

The 72-residue stretch at 7 to 78 folds into the KRAB domain; it reads VTFEDVAIDF…GRVFLQDQNP (72 aa). 3 C2H2-type zinc fingers span residues 172-194, 200-222, and 228-250; these read YQCN…KMTH, YACH…EKTH, and YKCH…ERTH. The C2H2-type 4; degenerate zinc-finger motif lies at 256-278; it reads YECDKSGKAFSQSSGFRGNKIIH.

Belongs to the krueppel C2H2-type zinc-finger protein family.

The protein localises to the nucleus. May be involved in transcriptional regulation. The chain is Zinc finger protein 705B (ZNF705B) from Homo sapiens (Human).